The following is a 504-amino-acid chain: ATP synthase subunit alpha 2 (504 aa).

169–176 contributes to the ATP binding site; the sequence is GDRQTGKT.

The protein belongs to the ATPase alpha/beta chains family. F-type ATPases have 2 components, CF(1) - the catalytic core - and CF(0) - the membrane proton channel. CF(1) has five subunits: alpha(3), beta(3), gamma(1), delta(1), epsilon(1). CF(0) has three main subunits: a(1), b(2) and c(9-12). The alpha and beta chains form an alternating ring which encloses part of the gamma chain. CF(1) is attached to CF(0) by a central stalk formed by the gamma and epsilon chains, while a peripheral stalk is formed by the delta and b chains.

The protein resides in the cell membrane. The catalysed reaction is ATP + H2O + 4 H(+)(in) = ADP + phosphate + 5 H(+)(out). Its function is as follows. Produces ATP from ADP in the presence of a proton gradient across the membrane. The alpha chain is a regulatory subunit. In Listeria monocytogenes serovar 1/2a (strain ATCC BAA-679 / EGD-e), this protein is ATP synthase subunit alpha 2.